A 146-amino-acid polypeptide reads, in one-letter code: Nitric oxide reductase subunit C (146 aa).

Residues 13–29 (IYFGGSVFFILLFLALT) form a helical; Signal-anchor membrane-spanning segment. Residues cysteine 61, cysteine 64, and histidine 65 each coordinate heme c.

As to quaternary structure, heterodimer of cytochromes b (large subunit) and c (small subunit).

The protein localises to the cell membrane. Its function is as follows. Component of the anaerobic respiratory chain that transforms nitrate to dinitrogen (denitrification). The polypeptide is Nitric oxide reductase subunit C (norC) (Pseudomonas aeruginosa (strain ATCC 15692 / DSM 22644 / CIP 104116 / JCM 14847 / LMG 12228 / 1C / PRS 101 / PAO1)).